Consider the following 239-residue polypeptide: Ribose-5-phosphate isomerase A (239 aa).

Substrate-binding positions include 40–43 (SGST), 96–99 (DGAD), and 110–113 (KGGG). The active-site Proton acceptor is glutamate 119. Position 137 (lysine 137) interacts with substrate.

This sequence belongs to the ribose 5-phosphate isomerase family. Homodimer.

It catalyses the reaction aldehydo-D-ribose 5-phosphate = D-ribulose 5-phosphate. Its pathway is carbohydrate degradation; pentose phosphate pathway; D-ribose 5-phosphate from D-ribulose 5-phosphate (non-oxidative stage): step 1/1. Catalyzes the reversible conversion of ribose-5-phosphate to ribulose 5-phosphate. The polypeptide is Ribose-5-phosphate isomerase A (Methanococcus vannielii (strain ATCC 35089 / DSM 1224 / JCM 13029 / OCM 148 / SB)).